We begin with the raw amino-acid sequence, 505 residues long: Catalase (505 aa).

A disordered region spans residues 1 to 25 (MSRQDKKLTGVFGHPVSDRENSMTA). Residues H56 and N129 contribute to the active site. Y339 contributes to the heme binding site.

The protein belongs to the catalase family. Homodimer. Heme is required as a cofactor.

The enzyme catalyses 2 H2O2 = O2 + 2 H2O. Functionally, decomposes hydrogen peroxide into water and oxygen; serves to protect cells from the toxic effects of hydrogen peroxide. The sequence is that of Catalase (katA) from Staphylococcus aureus (strain MRSA252).